We begin with the raw amino-acid sequence, 353 residues long: Phospho-N-acetylmuramoyl-pentapeptide-transferase (353 aa).

The next 10 helical transmembrane spans lie at 16-36, 64-84, 88-108, 130-150, 160-180, 198-218, 228-248, 256-276, 281-301, and 330-350; these read YISV…MYLM, AGTP…ATVL, LNNF…LIGI, LIFQ…YGHS, FPLF…IVGS, SILA…AVFA, IAGE…AFLW, VFMG…LAIV, ILLL…ILQV, and KIIV…LLSL.

Belongs to the glycosyltransferase 4 family. MraY subfamily. Mg(2+) is required as a cofactor.

It is found in the cell inner membrane. The enzyme catalyses UDP-N-acetyl-alpha-D-muramoyl-L-alanyl-gamma-D-glutamyl-meso-2,6-diaminopimeloyl-D-alanyl-D-alanine + di-trans,octa-cis-undecaprenyl phosphate = di-trans,octa-cis-undecaprenyl diphospho-N-acetyl-alpha-D-muramoyl-L-alanyl-D-glutamyl-meso-2,6-diaminopimeloyl-D-alanyl-D-alanine + UMP. It participates in cell wall biogenesis; peptidoglycan biosynthesis. Its function is as follows. Catalyzes the initial step of the lipid cycle reactions in the biosynthesis of the cell wall peptidoglycan: transfers peptidoglycan precursor phospho-MurNAc-pentapeptide from UDP-MurNAc-pentapeptide onto the lipid carrier undecaprenyl phosphate, yielding undecaprenyl-pyrophosphoryl-MurNAc-pentapeptide, known as lipid I. This chain is Phospho-N-acetylmuramoyl-pentapeptide-transferase, found in Aliarcobacter butzleri (strain RM4018) (Arcobacter butzleri).